We begin with the raw amino-acid sequence, 180 residues long: Protein SPO16 homolog (180 aa).

As to quaternary structure, homooligomer. Interacts with SHOC, SYCP1 and SYCE3.

The protein localises to the chromosome. In terms of biological role, plays a key role in reinforcing the integrity of the central element of the synaptonemal complex (SC) thereby stabilizing SC, ensuring progression of meiotic prophase I in male and female germ cells. Promotes homologous recombination and crossing-over in meiotic prophase I via its association with SHOC1. Required for the localization of TEX11 and MSH4 to recombination intermediates. This chain is Protein SPO16 homolog, found in Homo sapiens (Human).